Reading from the N-terminus, the 92-residue chain is Large ribosomal subunit protein bL25 (92 aa).

It belongs to the bacterial ribosomal protein bL25 family. In terms of assembly, part of the 50S ribosomal subunit; part of the 5S rRNA/L5/L18/L25 subcomplex. Contacts the 5S rRNA. Binds to the 5S rRNA independently of L5 and L18.

This is one of the proteins that binds to the 5S RNA in the ribosome where it forms part of the central protuberance. This is Large ribosomal subunit protein bL25 from Vibrio parahaemolyticus serotype O3:K6 (strain RIMD 2210633).